The following is a 470-amino-acid chain: Chromosomal replication initiator protein DnaA (470 aa).

Residues 1–79 (MTDDTWGLLR…AVQRLAFKVA (79 aa)) form a domain I, interacts with DnaA modulators region. The interval 79 to 128 (AANSPTRPVQPTMSEAIEEPAPLQTTVVDQLGNQEGNTSVKSPPEDLQAA) is domain II. The domain III, AAA+ region stretch occupies residues 129-350 (PLDPRFTFDS…GALTRLFAFA (222 aa)). ATP is bound by residues glycine 173, glycine 175, lysine 176, and threonine 177. The domain IV, binds dsDNA stretch occupies residues 351–470 (SLVGREIDMD…VEMLRRSLEA (120 aa)).

It belongs to the DnaA family. Oligomerizes as a right-handed, spiral filament on DNA at oriC.

It localises to the cytoplasm. In terms of biological role, plays an essential role in the initiation and regulation of chromosomal replication. ATP-DnaA binds to the origin of replication (oriC) to initiate formation of the DNA replication initiation complex once per cell cycle. Binds the DnaA box (a 9 base pair repeat at the origin) and separates the double-stranded (ds)DNA. Forms a right-handed helical filament on oriC DNA; dsDNA binds to the exterior of the filament while single-stranded (ss)DNA is stabiized in the filament's interior. The ATP-DnaA-oriC complex binds and stabilizes one strand of the AT-rich DNA unwinding element (DUE), permitting loading of DNA polymerase. After initiation quickly degrades to an ADP-DnaA complex that is not apt for DNA replication. Binds acidic phospholipids. The polypeptide is Chromosomal replication initiator protein DnaA (Ruegeria sp. (strain TM1040) (Silicibacter sp.)).